Consider the following 292-residue polypeptide: Probable alpha-L-glutamate ligase (292 aa).

The ATP-grasp domain maps to 104–287 (HQLLAAKGID…VATRIIEHVE (184 aa)). ATP-binding positions include Lys-141, 178-179 (EF), Asp-187, and 211-213 (RSN). Residues Asp-248, Glu-260, and Asn-262 each coordinate Mg(2+). The Mn(2+) site is built by Asp-248, Glu-260, and Asn-262.

This sequence belongs to the RimK family. It depends on Mg(2+) as a cofactor. The cofactor is Mn(2+).

The polypeptide is Probable alpha-L-glutamate ligase (Stenotrophomonas maltophilia (strain R551-3)).